Here is a 166-residue protein sequence, read N- to C-terminus: Small ribosomal subunit protein uS5 (166 aa).

The region spanning 11-74 is the S5 DRBM domain; the sequence is LQEKLIAVNR…EKARRNMINV (64 aa).

This sequence belongs to the universal ribosomal protein uS5 family. In terms of assembly, part of the 30S ribosomal subunit. Contacts proteins S4 and S8.

In terms of biological role, with S4 and S12 plays an important role in translational accuracy. Functionally, located at the back of the 30S subunit body where it stabilizes the conformation of the head with respect to the body. This chain is Small ribosomal subunit protein uS5, found in Haemophilus ducreyi (strain 35000HP / ATCC 700724).